A 129-amino-acid chain; its full sequence is Small ribosomal subunit protein uS11 (129 aa).

This sequence belongs to the universal ribosomal protein uS11 family. In terms of assembly, part of the 30S ribosomal subunit. Interacts with proteins S7 and S18. Binds to IF-3.

In terms of biological role, located on the platform of the 30S subunit, it bridges several disparate RNA helices of the 16S rRNA. Forms part of the Shine-Dalgarno cleft in the 70S ribosome. The chain is Small ribosomal subunit protein uS11 from Synechococcus sp. (strain RCC307).